Consider the following 433-residue polypeptide: Phosphomethylpyrimidine synthase (433 aa).

Residues Asn69, Met98, Tyr127, His163, 185–187, 226–229, and Glu265 contribute to the substrate site; these read SRG and DALR. His269 provides a ligand contact to Zn(2+). Tyr292 is a binding site for substrate. His333 lines the Zn(2+) pocket. [4Fe-4S] cluster is bound by residues Cys409, Cys412, and Cys416.

This sequence belongs to the ThiC family. [4Fe-4S] cluster serves as cofactor.

The enzyme catalyses 5-amino-1-(5-phospho-beta-D-ribosyl)imidazole + S-adenosyl-L-methionine = 4-amino-2-methyl-5-(phosphooxymethyl)pyrimidine + CO + 5'-deoxyadenosine + formate + L-methionine + 3 H(+). The protein operates within cofactor biosynthesis; thiamine diphosphate biosynthesis. Functionally, catalyzes the synthesis of the hydroxymethylpyrimidine phosphate (HMP-P) moiety of thiamine from aminoimidazole ribotide (AIR) in a radical S-adenosyl-L-methionine (SAM)-dependent reaction. This Finegoldia magna (strain ATCC 29328 / DSM 20472 / WAL 2508) (Peptostreptococcus magnus) protein is Phosphomethylpyrimidine synthase.